Here is a 1402-residue protein sequence, read N- to C-terminus: Eukaryotic translation initiation factor 4 gamma 1 (1402 aa).

Disordered stretches follow at residues 1–123 and 165–402; these read MSGA…SPEP and HEPN…YEYK. Residues Thr-11 and Thr-27 each carry the phosphothreonine modification. A compositionally biased stretch (low complexity) spans 53-64; it reads GPEHSPSESQPS. The segment covering 65-76 has biased composition (pro residues); sequence SPSPTPSPPPIL. The residue at position 120 (Ser-120) is a Phosphoserine. A compositionally biased stretch (low complexity) spans 238 to 251; sequence ASATPPAVPSATPA. Acidic residues predominate over residues 261–275; sequence QEEEGEEEEEEEEGE. 2 stretches are compositionally biased toward basic and acidic residues: residues 280-290 and 324-340; these read ESDKGGEDLHP and KELNKKEAVGDLLDAFK. Residues 359-370 show a composition bias toward low complexity; that stretch reads PTPESEGSSGPS. A compositionally biased stretch (basic and acidic residues) spans 379–388; that stretch reads WDAKEDKIHN. Position 452 is a phosphothreonine (Thr-452). Disordered stretches follow at residues 476–517, 536–563, 600–636, and 828–1028; these read ANLG…PPKG, AEKAWKPSSKRTAADKDRGEEDADGSKT, SKGSLTSSLRRPFQNPTSQWPSQHVPLPHGAESATTE, and MAKG…KREA. Positions 479–488 are enriched in low complexity; sequence GRPALSSRGP. An omega-N-methylarginine mark is found at Arg-490 and Arg-499. Basic and acidic residues predominate over residues 547–563; sequence TAADKDRGEEDADGSKT. Positions 567-793 constitute an MIF4G domain; that stretch reads FRRVRSILNK…QDVLDLRQSN (227 aa). The span at 602–621 shows a compositional bias: polar residues; sequence GSLTSSLRRPFQNPTSQWPS. Ser-832 bears the Phosphoserine mark. Residues Arg-836 and Arg-846 each carry the omega-N-methylarginine modification. Phosphoserine is present on residues Ser-881 and Ser-896. Low complexity predominate over residues 892-913; it reads GGRLSWGKGSSGSGAKPSDAAS. N6-acetyllysine is present on Lys-899. Over residues 918–937 the composition is skewed to polar residues; it reads PATSTLNRFSALQQAVPTES. Ser-948 and Ser-950 each carry phosphoserine. Residues 949–981 show a composition bias toward basic and acidic residues; that stretch reads LSRERGGKAGEPRRRLERSERGGDRGDRLDRAR. Ser-988 carries the phosphoserine; by PKC/PRKCA modification. The segment covering 989 to 1028 has biased composition (basic and acidic residues); it reads FSKEVEERSRERPSQPEGLRKAASLTEDRDRGRDAAKREA. A phosphoserine mark is found at Ser-990, Ser-997, and Ser-1012. Thr-1014 bears the Phosphothreonine mark. A phosphoserine mark is found at Ser-1034 and Ser-1041. The region spanning 1044-1166 is the MI domain; the sequence is ELEKKSKAII…PMGELFREIT (123 aa). The W2 domain occupies 1231-1401; it reads EESEAPGQRA…REVEEEESDH (171 aa). Ser-1399 carries the phosphoserine modification.

It belongs to the eukaryotic initiation factor 4G family. In terms of assembly, eIF4F is a multi-subunit complex, the composition of which varies with external and internal environmental conditions. It is composed of at least EIF4A, EIF4E (cap-binding) and EIF4G1/EIF4G3. Interacts with eIF3 complex, mutually exclusive with EIF4A1 or EIF4A2, EIF4E and through its N-terminus with PABPC1. Interacts with EIF4E or with EIF1 (mutually exclusive) through a common binding site. Interacts through its C-terminus with the serine/threonine kinases MKNK1, and with MKNK2. Appears to act as a scaffold protein, holding these enzymes in place to phosphorylate EIF4E. Non-phosphorylated EIF4EBP1 competes with EIF4G1/EIF4G3 to interact with EIF4E; insulin stimulated MAP-kinase (MAPK1 and MAPK3) phosphorylation of EIF4EBP1 causes dissociation of the complex allowing EIF4G1/EIF4G3 to bind and consequent initiation of translation. EIF4G1/EIF4G3 interacts with PABPC1 to bring about circularization of the mRNA. Interacts with EIF4E3. Interacts with CIRBP and MIF4GD. Interacts with RBM4. Interacts with HNRNPD/AUF1; the interaction requires RNA. Interacts with DDX3X; the interaction requires RNA. Interacts with DAZAP2. In terms of processing, phosphorylated at multiple sites in vivo. Phosphorylation at Ser-988 by PRKCA induces binding to MKNK1.

The protein resides in the cytoplasm. It localises to the nucleus. Its subcellular location is the stress granule. In terms of biological role, component of the protein complex eIF4F, which is involved in the recognition of the mRNA cap, ATP-dependent unwinding of 5'-terminal secondary structure and recruitment of mRNA to the ribosome. Exists in two complexes, either with EIF1 or with EIF4E (mutually exclusive). Together with EIF1, is required for leaky scanning, in particular for avoiding cap-proximal start codon. Together with EIF4E, antagonizes the scanning promoted by EIF1-EIF4G1 and locates the start codon (through a TISU element) without scanning. As a member of the eIF4F complex, required for endoplasmic reticulum stress-induced ATF4 mRNA translation. The polypeptide is Eukaryotic translation initiation factor 4 gamma 1 (EIF4G1) (Oryctolagus cuniculus (Rabbit)).